We begin with the raw amino-acid sequence, 264 residues long: Proliferating cell nuclear antigen 2 (264 aa).

A DNA-binding region spans residues 61–80 (RCDRNLSMGMNLGNMSKMLK).

The protein belongs to the PCNA family. Homo- and heterotrimer. Interacts with POLH, ATXR5 and ATXR6.

It is found in the nucleus. In terms of biological role, this protein is an auxiliary protein of DNA polymerase delta and is involved in the control of eukaryotic DNA replication by increasing the polymerase's processibility during elongation of the leading strand. May be involved in UV resistance. This is Proliferating cell nuclear antigen 2 (PCNA2) from Arabidopsis thaliana (Mouse-ear cress).